Reading from the N-terminus, the 1025-residue chain is Leucyl-cystinyl aminopeptidase (1025 aa).

M1 is modified (N-acetylmethionine). The Cytoplasmic segment spans residues 1–109 (METFTNDRLQ…DGTCSVPSAR (109 aa)). Positions 53-54 (LL) match the Dileucine internalization motif motif. Y70 is modified (phosphotyrosine). The short motif at 76-77 (LL) is the Dileucine internalization motif element. Phosphoserine; by PKC/PRKCZ; in vitro occurs at positions 80 and 91. Residues 96-101 (RQSPDG) are tankyrase binding. A helical; Signal-anchor for type II membrane protein transmembrane segment spans residues 110–131 (TLVICVFVIVVAVSVIMVIYLL). At 132–1025 (PRCTFTKEGC…RNLKTLTLWL (894 aa)) the chain is on the extracellular side. N-linked (GlcNAc...) asparagine glycans are attached at residues N145, N184, N215, N256, and N266. E295 contributes to the substrate binding site. N-linked (GlcNAc...) asparagine glycosylation is found at N368 and N374. 428-432 (GAMEN) contributes to the substrate binding site. N447 is a glycosylation site (N-linked (GlcNAc...) asparagine). H464 is a Zn(2+) binding site. E465 serves as the catalytic Proton acceptor. The Zn(2+) site is built by H468 and E487. N-linked (GlcNAc...) asparagine glycans are attached at residues N525, N578, N664, N682, N695, N758, N834, N850, and N989.

It belongs to the peptidase M1 family. Homodimer. Binds tankyrases 1 and 2. It depends on Zn(2+) as a cofactor. Post-translationally, N-glycosylated. In terms of tissue distribution, highly expressed in heart, brain, spleen, lung, kidney and white adipose tissue. Detected at lower levels in skeletal muscle and liver.

It localises to the cell membrane. It is found in the endomembrane system. The enzyme catalyses Release of an N-terminal amino acid, Cys-|-Xaa-, in which the half-cystine residue is involved in a disulfide loop, notably in oxytocin or vasopressin. Hydrolysis rates on a range of aminoacyl arylamides exceed that for the cystinyl derivative, however.. Its function is as follows. Release of an N-terminal amino acid, cleave before cysteine, leucine as well as other amino acids. Degrades peptide hormones such as oxytocin, vasopressin and angiotensin III, and plays a role in maintaining homeostasis during pregnancy. May be involved in the inactivation of neuronal peptides in the brain. Cleaves Met-enkephalin and dynorphin. Binds angiotensin IV and may be the angiotensin IV receptor in the brain. The protein is Leucyl-cystinyl aminopeptidase (Lnpep) of Rattus norvegicus (Rat).